Reading from the N-terminus, the 75-residue chain is Probable protein BRICK1-B (75 aa).

Residues 41-72 adopt a coiled-coil conformation; sequence MSCRSRLATLNEKLTTLERRIEYIEARVTKGE.

The protein belongs to the BRK1 family.

It localises to the cytoplasm. The protein resides in the cytoskeleton. Involved in regulation of actin and microtubule organization. Part of a WAVE complex that activates the Arp2/3 complex. In Xenopus laevis (African clawed frog), this protein is Probable protein BRICK1-B (brk1-b).